A 557-amino-acid polypeptide reads, in one-letter code: Formate--tetrahydrofolate ligase (557 aa).

65-72 contacts ATP; that stretch reads TPAGEGKT.

It belongs to the formate--tetrahydrofolate ligase family.

The enzyme catalyses (6S)-5,6,7,8-tetrahydrofolate + formate + ATP = (6R)-10-formyltetrahydrofolate + ADP + phosphate. It participates in one-carbon metabolism; tetrahydrofolate interconversion. This chain is Formate--tetrahydrofolate ligase, found in Acidiphilium cryptum (strain JF-5).